The following is a 566-amino-acid chain: F-box/WD repeat-containing protein 5 (566 aa).

The F-box domain occupies 3-49 (EGGTPLLPDSLVYQIFLSLGPADVLAAGLVCRQWQAVSRDEFLWREQ). WD repeat units follow at residues 83–125 (VEVQ…DLTI), 126–178 (SLLH…LDSF), 179–238 (ALLS…VKRL), and 239–281 (FKIQ…RIFD). Ser151 is modified (phosphoserine; by PLK4). Position 284 is a phosphoserine (Ser284). The short motif at 303–311 (RHFLDRVLE) is the D-box element. WD repeat units lie at residues 394–447 (ALDH…DLLV), 458–501 (RALR…RHYN), and 502–539 (ICLA…KAWR).

It belongs to the FBXW5 family. As to quaternary structure, part of the SCF (SKP1-CUL1-F-box) E3 ubiquitin-protein ligase complex SCF(FBXW5) composed of CUL1, SKP1, RBX1 and FBXW5. Component of the DCX(FBXW5) E3 ubiquitin ligase complex, at least composed of (CUL4A or CUL4B), DDB1, FBXW5 and RBX1. Interacts with CDC20, EPS8, TSC1, TSC2 and SASS6. Interacts with TNFAIP8L1; TNFAIP8L1 competes with TSC2 to bind FBXW5 increasing TSC2 stability by preventing its ubiquitination. Phosphorylated at Ser-151 by PLK4 during the G1/S transition, leading to inhibit its ability to ubiquitinate SASS6. In terms of processing, ubiquitinated and degraded by the APC/C complex during mitosis and G1 phase.

It is found in the cytoplasm. The protein operates within protein modification; protein ubiquitination. In terms of biological role, substrate recognition component of both SCF (SKP1-CUL1-F-box protein) and DCX (DDB1-CUL4-X-box) E3 ubiquitin-protein ligase complexes. Substrate recognition component of the SCF(FBXW5) E3 ubiquitin-protein ligase complex which mediates the ubiquitination and subsequent proteasomal degradation of SASS6 during S phase, leading to prevent centriole reduplication. The SCF(FBXW5) complex also mediates ubiquitination and degradation of actin-regulator EPS8 during G2 phase, leading to the transient degradation of EPS8 and subsequent cell shape changes required to allow mitotic progression. Substrate-specific adapter of the DCX(FBXW5) E3 ubiquitin-protein ligase complex which mediates the polyubiquitination and subsequent degradation of TSC2. May also act as a negative regulator of MAP3K7/TAK1 signaling in the interleukin-1B (IL1B) signaling pathway. This chain is F-box/WD repeat-containing protein 5 (FBXW5), found in Homo sapiens (Human).